The sequence spans 268 residues: Centromere protein Q (268 aa).

Residues 1-80 (MSGKANASKK…KTWQPLSKST (80 aa)) are disordered. Phosphoserine occurs at positions 31 and 50. The span at 58–72 (TNLKHGKTAASKRKT) shows a compositional bias: basic residues. Residues 170 to 206 (ELMTGNIQSLKNKIQILASEVEEEEERVKQMHQINSS) are a coiled coil. S249 is subject to Phosphoserine.

It belongs to the CENP-Q/OKP1 family. In terms of assembly, component of the CENPA-CAD complex, composed of CENPI, CENPK, CENPL, CENPO, CENPP, CENPQ, CENPR and CENPS. The CENPA-CAD complex interacts with the CENPA-NAC complex, at least composed of CENPA, CENPC, CENPH, CENPM, CENPN, CENPT and CENPU. Post-translationally, phosphorylation at Ser-50 is essential for CENPE recruitment to kinetochores and orderly chromosome congression.

It localises to the nucleus. The protein localises to the chromosome. It is found in the centromere. Functionally, component of the CENPA-CAD (nucleosome distal) complex, a complex recruited to centromeres which is involved in assembly of kinetochore proteins, mitotic progression and chromosome segregation. May be involved in incorporation of newly synthesized CENPA into centromeres via its interaction with the CENPA-NAC complex. Plays an important role in chromosome congression and in the recruitment of CENP-O complex (which comprises CENPO, CENPP, CENPQ and CENPU), CENPE and PLK1 to the kinetochores. This Homo sapiens (Human) protein is Centromere protein Q (CENPQ).